Reading from the N-terminus, the 218-residue chain is Glutathione S-transferase D7 (218 aa).

A GST N-terminal domain is found at 1–82 (MTPVLYYLPP…YLVSAYGKDE (82 aa)). Residues Ser11, 52–54 (HCI), and 66–68 (ESR) each bind glutathione. Residues 88 to 207 (DFRSRAIVDQ…KEINETGAET (120 aa)) form the GST C-terminal domain.

The protein belongs to the GST superfamily. Theta family. As to quaternary structure, homodimer.

It catalyses the reaction RX + glutathione = an S-substituted glutathione + a halide anion + H(+). Its function is as follows. Conjugation of reduced glutathione to a wide number of exogenous and endogenous hydrophobic electrophiles. This chain is Glutathione S-transferase D7, found in Anopheles gambiae (African malaria mosquito).